Here is an 88-residue protein sequence, read N- to C-terminus: Small ribosomal subunit protein bS20 (88 aa).

Residues 1–25 are disordered; it reads MANTAQALKRIRQTNKARAQNASQR. Polar residues predominate over residues 16–25; sequence KARAQNASQR.

This sequence belongs to the bacterial ribosomal protein bS20 family.

Functionally, binds directly to 16S ribosomal RNA. The chain is Small ribosomal subunit protein bS20 from Dichelobacter nodosus (strain VCS1703A).